The primary structure comprises 146 residues: Hemoglobin subunit beta-1 (146 aa).

In terms of domain architecture, Globin spans 2-146 (EWTDAEKSTI…VVAAMGSRYF (145 aa)). Heme b is bound by residues His63 and His92.

Belongs to the globin family. In terms of assembly, heterotetramer of two alpha chains and two beta chains. Red blood cells.

Its function is as follows. Involved in oxygen transport from gills to the various peripheral tissues. The sequence is that of Hemoglobin subunit beta-1 (hbb1) from Oncorhynchus mykiss (Rainbow trout).